A 417-amino-acid chain; its full sequence is NADH-quinone oxidoreductase subunit D (417 aa).

This sequence belongs to the complex I 49 kDa subunit family. In terms of assembly, NDH-1 is composed of 14 different subunits. Subunits NuoB, C, D, E, F, and G constitute the peripheral sector of the complex.

The protein localises to the cell inner membrane. It carries out the reaction a quinone + NADH + 5 H(+)(in) = a quinol + NAD(+) + 4 H(+)(out). NDH-1 shuttles electrons from NADH, via FMN and iron-sulfur (Fe-S) centers, to quinones in the respiratory chain. The immediate electron acceptor for the enzyme in this species is believed to be ubiquinone. Couples the redox reaction to proton translocation (for every two electrons transferred, four hydrogen ions are translocated across the cytoplasmic membrane), and thus conserves the redox energy in a proton gradient. The polypeptide is NADH-quinone oxidoreductase subunit D (Burkholderia cenocepacia (strain HI2424)).